We begin with the raw amino-acid sequence, 1265 residues long: 1-phosphatidylinositol 4,5-bisphosphate phosphodiesterase gamma-2 (1265 aa).

Positions 20–131 constitute a PH domain; the sequence is RALELGTVMT…WLSGLKILHQ (112 aa). Residues 312–456 enclose the PI-PLC X-box domain; that stretch reads QDMNNPLSHY…LREKIIIKHK (145 aa). Residues His327 and His372 contribute to the active site. SH2 domains lie at 532-635 and 646-735; these read WFHK…TDPV and WYYD…RYPV. Residues Tyr753 and Tyr759 each carry the phosphotyrosine; by BTK modification. The 61-residue stretch at 769 to 829 folds into the SH3 domain; that stretch reads MPQRTVKALY…PSNYVEDIST (61 aa). One can recognise a PI-PLC Y-box domain in the interval 930–1044; it reads LSDLVVYCKP…GYVLQPESMR (115 aa). Residues 1038-1169 form the C2 domain; it reads LQPESMRTEK…SGFRSVPLKN (132 aa). Phosphotyrosine; by BTK is present on Tyr1197. A phosphotyrosine mark is found at Tyr1217 and Tyr1245.

In terms of assembly, part of a complex composed of EEIG1, TNFRSF11A/RANK, PLCG2, GAB2, TEC and BTK; complex formation increases in the presence of TNFSF11/RANKL. Interacts (via SH2 domain) with CSF1R (tyrosine phosphorylated). Interacts constitutively with THEMIS2. Requires Ca(2+) as cofactor. Post-translationally, phosphorylated on tyrosine residues by CSF1R. Phosphorylated on tyrosine residues by BTK and SYK; upon ligand-induced activation of a variety of growth factor receptors and immune system receptors. Phosphorylation leads to increased phospholipase activity.

The protein resides in the membrane raft. It carries out the reaction a 1,2-diacyl-sn-glycero-3-phospho-(1D-myo-inositol-4,5-bisphosphate) + H2O = 1D-myo-inositol 1,4,5-trisphosphate + a 1,2-diacyl-sn-glycerol + H(+). In terms of biological role, the production of the second messenger molecules diacylglycerol (DAG) and inositol 1,4,5-trisphosphate (IP3) is mediated by activated phosphatidylinositol-specific phospholipase C enzymes. It is a crucial enzyme in transmembrane signaling. This is 1-phosphatidylinositol 4,5-bisphosphate phosphodiesterase gamma-2 from Homo sapiens (Human).